The sequence spans 473 residues: H(+)/Cl(-) exchange transporter ClcA (473 aa).

Over 1–32 (MKTDTPSLETPQAARLRRRQLIRQLLERDKTP) the chain is Cytoplasmic. A helical transmembrane segment spans residues 33-69 (LAILFMAAVVGTLVGLAAVAFDKGVAWLQNQRMGALV). Residues 70–76 (HTADNYP) are Periplasmic-facing. Residues 77-100 (LLLTVAFLCSAVLAMFGYFLVRKY) traverse the membrane as a helical segment. The short motif at 106–110 (GSGIP) is the Selectivity filter part_1 element. Residue serine 107 coordinates chloride. The helical intramembrane region spans 109–116 (IPEIEGAL). The Cytoplasmic segment spans residues 117–123 (EDQRPVR). Helical transmembrane passes span 124–141 (WWRV…TLGG) and 148–166 (EGPT…LDIF). The Selectivity filter part_2 motif lies at 146–150 (GREGP). The Cytoplasmic portion of the chain corresponds to 167-176 (RLKGDEARHT). Intramembrane regions (helical) lie at residues 177 to 189 (LLAT…LAAA) and 193 to 201 (PLAGILFII). Over 202–214 (EEMRPQFRYTLIS) the chain is Cytoplasmic. The helical transmembrane segment at 215–232 (IKAVFIGVIMSTIMYRIF) threads the bilayer. Topologically, residues 233 to 252 (NHEVALIDVGKLSDAPLNTQ) are periplasmic. The helical transmembrane segment at 253–281 (WLYLILGIIFGIFGPIFNKWVLGMQDLLH) threads the bilayer. Residues 282–287 (RVHGGN) lie on the Cytoplasmic side of the membrane. The chain crosses the membrane as a helical span at residues 288–309 (ITKWVLMGGAIGGLCGLLGFVA). Topologically, residues 310–329 (PATSGGGFNLIPIATAGNFS) are periplasmic. A run of 2 helical transmembrane segments spans residues 330 to 349 (MGML…LCFS) and 355 to 376 (GIFA…MVVV). Positions 355–359 (GIFAP) match the Selectivity filter part_3 motif. Positions 356 and 357 each coordinate chloride. Residues 377-386 (ELFPQYHLEA) lie on the Periplasmic side of the membrane. Positions 387-401 (GTFAIAGMGALLAAS) form an intramembrane region, helical. The segment at residues 402–404 (IRA) is an intramembrane region (note=Loop between two helices). The helical intramembrane region spans 405-416 (PLTGIILVLEMT). Positions 417–421 (DNYQL) form an intramembrane region, note=Loop between two helices. The helical transmembrane segment at 422-438 (ILPMIITGLGATLLAQF) threads the bilayer. Topologically, residues 439–473 (TGGKPLYSAILARTLAKQEAEQLARSKAASASENT) are cytoplasmic. Tyrosine 445 lines the chloride pocket.

The protein belongs to the chloride channel (TC 2.A.49) family. ClcA subfamily. In terms of assembly, homodimer.

It localises to the cell inner membrane. It catalyses the reaction 2 chloride(in) + H(+)(out) = 2 chloride(out) + H(+)(in). In terms of biological role, proton-coupled chloride transporter. Functions as antiport system and exchanges two chloride ions for 1 proton. Probably acts as an electrical shunt for an outwardly-directed proton pump that is linked to amino acid decarboxylation, as part of the extreme acid resistance (XAR) response. This chain is H(+)/Cl(-) exchange transporter ClcA, found in Shigella boydii serotype 18 (strain CDC 3083-94 / BS512).